We begin with the raw amino-acid sequence, 124 residues long: UPF0102 protein TM1040_0449 (124 aa).

Belongs to the UPF0102 family.

This is UPF0102 protein TM1040_0449 from Ruegeria sp. (strain TM1040) (Silicibacter sp.).